Here is a 961-residue protein sequence, read N- to C-terminus: Rho guanine nucleotide exchange factor 2 (961 aa).

The segment at 12 to 59 (GHLFTTISVSGMTMCYACNKSITAKEALICPTCNVTIHNRCKDTLANC) adopts a Phorbol-ester/DAG-type zinc-finger fold. Phosphoserine is present on residues Ser-82, Ser-95, Ser-102, Ser-106, Ser-110, Ser-124, Ser-136, Ser-145, Ser-147, and Ser-150. The tract at residues 104-134 (RQSLLGSRRGRSPLSLAKSVSTTNIAGHFND) is interaction with DYNLT1. The 198-residue stretch at 209-406 (KQQDVIYELI…KELLSNVDQD (198 aa)) folds into the DH domain. An N6-acetyllysine modification is found at Lys-327. The PH domain occupies 446–545 (KLIHDGCLLW…WIRVIQQSVR (100 aa)). Residues 561-588 (EAYLRRIKMELQQKDRALVELLQEKVGL) are a coiled coil. 2 positions are modified to phosphoserine: Ser-619 and Ser-622. Position 653 is a phosphothreonine; by MAPK1 or MAPK3 (Thr-653). The disordered stretch occupies residues 659 to 679 (LPVETDSGGNTSPGVTANGEA). Phosphoserine occurs at positions 665, 670, 685, and 756. Positions 742–761 (PEGPERREKLTRANSRDGEA) are enriched in basic and acidic residues. Residues 742 to 770 (PEGPERREKLTRANSRDGEAGRAGAAPVA) are disordered. Positions 772 to 841 (EKQATELALL…RQLAALGHTE (70 aa)) form a coiled coil. Phosphoserine; by PAK1 and AURKA is present on Ser-860. Positions 867–961 (LYLSFTPPQP…RDGEPVASES (95 aa)) are disordered. Residue Tyr-868 is modified to Phosphotyrosine. Residue Ser-870 is modified to Phosphoserine; by PAK4. Residues 894-913 (RPFEDRERQELGSPDERLQD) are compositionally biased toward basic and acidic residues. Residues Ser-906, Ser-914, and Ser-915 each carry the phosphoserine modification. The span at 915–925 (SDPDTGSEEEG) shows a compositional bias: acidic residues. Phosphothreonine is present on Thr-919. Residues Ser-921, Ser-927, Ser-928, and Ser-931 each carry the phosphoserine modification. Ser-935 is subject to Phosphoserine; by CDK1.

In terms of assembly, found in a complex composed at least of ARHGEF2, NOD2 and RIPK2. Interacts with RIPK2; the interaction mediates tyrosine phosphorylation of RIPK2 by Src kinase CSK. Interacts with RIPK1 and RIPK3. Interacts with YWHAZ/14-3-3 zeta; when phosphorylated at Ser-860. Interacts with the kinases PAK4, AURKA and MAPK1. Interacts with RHOA and RAC1. Interacts with NOD1. Interacts (via the N- terminal zinc finger) with CAPN6 (via domain II). Interacts with DYNLT1. In terms of processing, phosphorylation of Ser-860 by PAK1 induces binding to protein YWHAZ, promoting its relocation to microtubules and the inhibition of its activity. Phosphorylated by AURKA and CDK1 during mitosis, which negatively regulates its activity. Phosphorylation by MAPK1 or MAPK3 increases nucleotide exchange activity. Phosphorylation by PAK4 releases GEF-H1 from the microtubules. Phosphorylated on serine, threonine and tyrosine residues in a RIPK2-dependent manner.

It is found in the cytoplasm. The protein localises to the cytoskeleton. It localises to the cell junction. Its subcellular location is the tight junction. The protein resides in the golgi apparatus. It is found in the spindle. The protein localises to the cytoplasmic vesicle. Activates Rho-GTPases by promoting the exchange of GDP for GTP. May be involved in epithelial barrier permeability, cell motility and polarization, dendritic spine morphology, antigen presentation, leukemic cell differentiation, cell cycle regulation, innate immune response, and cancer. Binds Rac-GTPases, but does not seem to promote nucleotide exchange activity toward Rac-GTPases. May stimulate instead the cortical activity of Rac. Inactive toward CDC42, TC10, or Ras-GTPases. Forms an intracellular sensing system along with NOD1 for the detection of microbial effectors during cell invasion by pathogens. Involved in innate immune signaling transduction pathway promoting cytokine IL6/interleukin-6 and TNF-alpha secretion in macrophage upon stimulation by bacterial peptidoglycans; acts as a signaling intermediate between NOD2 receptor and RIPK2 kinase. Contributes to the tyrosine phosphorylation of RIPK2 through Src tyrosine kinase leading to NF-kappaB activation by NOD2. Overexpression activates Rho-, but not Rac-GTPases, and increases paracellular permeability. Involved in neuronal progenitor cell division and differentiation. Involved in the migration of precerebellar neurons. In Sus scrofa (Pig), this protein is Rho guanine nucleotide exchange factor 2 (ARHGEF2).